The following is a 90-amino-acid chain: Elongation factor 1-beta (90 aa).

Belongs to the EF-1-beta/EF-1-delta family.

Promotes the exchange of GDP for GTP in EF-1-alpha/GDP, thus allowing the regeneration of EF-1-alpha/GTP that could then be used to form the ternary complex EF-1-alpha/GTP/AAtRNA. This chain is Elongation factor 1-beta, found in Sulfolobus acidocaldarius (strain ATCC 33909 / DSM 639 / JCM 8929 / NBRC 15157 / NCIMB 11770).